The chain runs to 579 residues: Thiol:disulfide interchange protein DsbD (579 aa).

Residues 1 to 16 form the signal peptide; sequence MKKLFLFFTLIFTAFA. 2 cysteine pairs are disulfide-bonded: Cys124/Cys129 and Cys193/Cys315. 8 helical membrane-spanning segments follow: residues 178–198, 230–250, 254–274, 296–316, 337–357, 376–396, 397–417, and 420–440; these read IFGF…LPML, LTYT…QIAL, YVMI…FGLF, GAFG…SPCT, AVTL…ITLF, FGFV…PEVW, ESRL…LQMS, and GFGY…VQPL. The Thioredoxin domain occupies 449-579; sequence TTTQSAVENM…AFSNWIEKLL (131 aa). Residues Cys495 and Cys498 are joined by a disulfide bond.

Belongs to the thioredoxin family. DsbD subfamily.

The protein resides in the cell inner membrane. It carries out the reaction [protein]-dithiol + NAD(+) = [protein]-disulfide + NADH + H(+). It catalyses the reaction [protein]-dithiol + NADP(+) = [protein]-disulfide + NADPH + H(+). Functionally, required to facilitate the formation of correct disulfide bonds in some periplasmic proteins and for the assembly of the periplasmic c-type cytochromes. Acts by transferring electrons from cytoplasmic thioredoxin to the periplasm. This transfer involves a cascade of disulfide bond formation and reduction steps. The chain is Thiol:disulfide interchange protein DsbD from Haemophilus influenzae (strain PittGG).